Here is a 70-residue protein sequence, read N- to C-terminus: Small ribosomal subunit protein bS21 (70 aa).

The protein belongs to the bacterial ribosomal protein bS21 family.

The sequence is that of Small ribosomal subunit protein bS21 from Nitratidesulfovibrio vulgaris (strain ATCC 29579 / DSM 644 / CCUG 34227 / NCIMB 8303 / VKM B-1760 / Hildenborough) (Desulfovibrio vulgaris).